The chain runs to 540 residues: Glucose-6-phosphate isomerase (540 aa).

Residue Glu-346 is the Proton donor of the active site. Residues His-377 and Lys-505 contribute to the active site.

The protein belongs to the GPI family.

It localises to the cytoplasm. The enzyme catalyses alpha-D-glucose 6-phosphate = beta-D-fructose 6-phosphate. It participates in carbohydrate biosynthesis; gluconeogenesis. The protein operates within carbohydrate degradation; glycolysis; D-glyceraldehyde 3-phosphate and glycerone phosphate from D-glucose: step 2/4. Functionally, catalyzes the reversible isomerization of glucose-6-phosphate to fructose-6-phosphate. This is Glucose-6-phosphate isomerase from Francisella tularensis subsp. tularensis (strain WY96-3418).